Reading from the N-terminus, the 181-residue chain is 3-isopropylmalate dehydratase small subunit (181 aa).

This sequence belongs to the LeuD family. LeuD type 2 subfamily. As to quaternary structure, heterodimer of LeuC and LeuD.

It carries out the reaction (2R,3S)-3-isopropylmalate = (2S)-2-isopropylmalate. The protein operates within amino-acid biosynthesis; L-leucine biosynthesis; L-leucine from 3-methyl-2-oxobutanoate: step 2/4. Its function is as follows. Catalyzes the isomerization between 2-isopropylmalate and 3-isopropylmalate, via the formation of 2-isopropylmaleate. The chain is 3-isopropylmalate dehydratase small subunit from Deinococcus deserti (strain DSM 17065 / CIP 109153 / LMG 22923 / VCD115).